The primary structure comprises 114 residues: Non-specific lipid-transfer protein 2 (114 aa).

A signal peptide spans 1 to 23 (MEMVNKIACFVLLCMVVVAPHAE). 4 disulfides stabilise this stretch: Cys27/Cys73, Cys37/Cys50, Cys51/Cys96, and Cys71/Cys110.

It belongs to the plant LTP family.

Functionally, plant non-specific lipid-transfer proteins transfer phospholipids as well as galactolipids across membranes. May play a role in wax or cutin deposition in the cell walls of expanding epidermal cells and certain secretory tissues. This Solanum pennellii (Tomato) protein is Non-specific lipid-transfer protein 2 (LTP2).